We begin with the raw amino-acid sequence, 634 residues long: 1-deoxy-D-xylulose-5-phosphate synthase (634 aa).

Thiamine diphosphate contacts are provided by residues His74 and 115–117 (AHS). Asp146 contacts Mg(2+). Residues 147–148 (GA), Asn176, Tyr283, and Glu365 contribute to the thiamine diphosphate site. Asn176 is a Mg(2+) binding site.

Belongs to the transketolase family. DXPS subfamily. As to quaternary structure, homodimer. The cofactor is Mg(2+). Thiamine diphosphate is required as a cofactor.

It carries out the reaction D-glyceraldehyde 3-phosphate + pyruvate + H(+) = 1-deoxy-D-xylulose 5-phosphate + CO2. It functions in the pathway metabolic intermediate biosynthesis; 1-deoxy-D-xylulose 5-phosphate biosynthesis; 1-deoxy-D-xylulose 5-phosphate from D-glyceraldehyde 3-phosphate and pyruvate: step 1/1. In terms of biological role, catalyzes the acyloin condensation reaction between C atoms 2 and 3 of pyruvate and glyceraldehyde 3-phosphate to yield 1-deoxy-D-xylulose-5-phosphate (DXP). The protein is 1-deoxy-D-xylulose-5-phosphate synthase of Burkholderia pseudomallei (strain 668).